A 508-amino-acid polypeptide reads, in one-letter code: Aspartyl/glutamyl-tRNA(Asn/Gln) amidotransferase subunit B (508 aa).

It belongs to the GatB/GatE family. GatB subfamily. As to quaternary structure, heterotrimer of A, B and C subunits.

It catalyses the reaction L-glutamyl-tRNA(Gln) + L-glutamine + ATP + H2O = L-glutaminyl-tRNA(Gln) + L-glutamate + ADP + phosphate + H(+). The enzyme catalyses L-aspartyl-tRNA(Asn) + L-glutamine + ATP + H2O = L-asparaginyl-tRNA(Asn) + L-glutamate + ADP + phosphate + 2 H(+). Allows the formation of correctly charged Asn-tRNA(Asn) or Gln-tRNA(Gln) through the transamidation of misacylated Asp-tRNA(Asn) or Glu-tRNA(Gln) in organisms which lack either or both of asparaginyl-tRNA or glutaminyl-tRNA synthetases. The reaction takes place in the presence of glutamine and ATP through an activated phospho-Asp-tRNA(Asn) or phospho-Glu-tRNA(Gln). This Salinibacter ruber (strain DSM 13855 / M31) protein is Aspartyl/glutamyl-tRNA(Asn/Gln) amidotransferase subunit B.